The chain runs to 159 residues: U1 small nuclear ribonucleoprotein C (159 aa).

A Matrin-type zinc finger spans residues 4–36 (FYCDYCDTYLTHDSPSVRKTHCSGRKHKENVKD). Disordered stretches follow at residues 63 to 95 (PPTP…MPAP) and 139 to 159 (MRPP…RPDR). Residues 77-95 (IPPPPSMGGPPRPGMMPAP) are compositionally biased toward pro residues.

The protein belongs to the U1 small nuclear ribonucleoprotein C family. As to quaternary structure, component of the U1 snRNP. The U1 snRNP is composed of the U1 snRNA and the 7 core Sm proteins snrpb, snrpd1, snrpd2, snrpd3, snrpe, snrpf and snrpg that assemble in a heptameric protein ring on the Sm site of the small nuclear RNA to form the core snRNP, and at least 3 U1 snRNP-specific proteins snrnp70/U1-70K, snrpa/U1-A and snrpc/U1-C. snrpc/U1-C interacts with U1 snRNA and the 5' splice-site region of the pre-mRNA.

It localises to the nucleus. Component of the spliceosomal U1 snRNP, which is essential for recognition of the pre-mRNA 5' splice-site and the subsequent assembly of the spliceosome. snrpc/U1-C is directly involved in initial 5' splice-site recognition for both constitutive and regulated alternative splicing. The interaction with the 5' splice-site seems to precede base-pairing between the pre-mRNA and the U1 snRNA. Stimulates commitment or early (E) complex formation by stabilizing the base pairing of the 5' end of the U1 snRNA and the 5' splice-site region. The sequence is that of U1 small nuclear ribonucleoprotein C from Xenopus tropicalis (Western clawed frog).